Reading from the N-terminus, the 156-residue chain is Snaclec alboaggregin-B subunit alpha (156 aa).

An N-terminal signal peptide occupies residues 1–23 (MGRFIFVSFGLLVVFLSLSGTGA). The C-type lectin domain occupies 24 to 151 (DCPSDWSSFK…CEQKHIFMCK (128 aa)). 3 cysteine pairs are disulfide-bonded: C25–C36, C53–C150, and C125–C142.

It belongs to the snaclec family. Heterodimer of subunits alpha and beta; disulfide-linked. Expressed by the venom gland.

The protein resides in the secreted. Weakly agglutinates platelets at high doses by binding to GPIbalpha (GP1BA). The chain is Snaclec alboaggregin-B subunit alpha from Trimeresurus albolabris (White-lipped pit viper).